We begin with the raw amino-acid sequence, 579 residues long: Probable cytochrome c biosynthesis protein (579 aa).

It belongs to the CcmF/CycK/Ccl1/NrfE/CcsA family.

It localises to the mitochondrion. Its function is as follows. Could be involved in assembly and maturation of cytochromes c. May play a role in guidance of apocytochromes and heme groups for the covalent linkage introduced by the cytochrome-c-heme lyase. This is Probable cytochrome c biosynthesis protein from Daucus carota (Wild carrot).